A 495-amino-acid chain; its full sequence is Cobyric acid synthase (495 aa).

In terms of domain architecture, GATase cobBQ-type spans 258 to 427 (GLRVAAVRLP…WHGLFDNDGF (170 aa)). Cys339 (nucleophile) is an active-site residue. His419 is an active-site residue.

It belongs to the CobB/CobQ family. CobQ subfamily.

The protein operates within cofactor biosynthesis; adenosylcobalamin biosynthesis. In terms of biological role, catalyzes amidations at positions B, D, E, and G on adenosylcobyrinic A,C-diamide. NH(2) groups are provided by glutamine, and one molecule of ATP is hydrogenolyzed for each amidation. This Mycobacterium sp. (strain KMS) protein is Cobyric acid synthase.